Consider the following 382-residue polypeptide: Apolipoprotein A-IV (382 aa).

An N-terminal signal peptide occupies residues 1–20 (MFLRAVVLTLALVAVTGARA). 13 consecutive repeat copies span residues 33–54 (DYFS…QSEL), 60–81 (ALFQ…KKLV), 82–103 (PFAT…EEIR), 115–136 (PHAN…QRLG), 137–158 (PYAD…RHLT), 159–180 (SHAQ…SSLT), 181–202 (PYAD…GHLT), 203–224 (PYAD…RSLA), 225–246 (PYAQ…FQMK), 247–268 (KNAE…QRLA), 269–286 (PVVE…KGLQ), 287–308 (ESLA…HNMG), and 309–330 (PYGD…QKLG). A 13 X 22 AA approximate tandem repeats region spans residues 33-330 (DYFSQLSNNA…QVEELRQKLG (298 aa)). The disordered stretch occupies residues 362–382 (ENQDMPLALPEQEQAPGPLES).

This sequence belongs to the apolipoprotein A1/A4/E family. Homodimer.

The protein localises to the secreted. Its function is as follows. May have a role in chylomicrons and VLDL secretion and catabolism. Required for efficient activation of lipoprotein lipase by ApoC-II; potent activator of LCAT. Apoa-IV is a major component of HDL and chylomicrons. This chain is Apolipoprotein A-IV (APOA4), found in Acinonyx jubatus (Cheetah).